The following is a 62-amino-acid chain: Protein DsrB (62 aa).

Belongs to the DsrB family.

In Shigella flexneri serotype 5b (strain 8401), this protein is Protein DsrB.